The chain runs to 223 residues: Fibroblast growth factor-binding protein 2 (223 aa).

The signal sequence occupies residues 1-19; it reads MKFVPCLLLVTLSCLGTLG. Positions 23-45 are disordered; it reads RQKQGSTGEEFHFQTGGRDSCTM. Intrachain disulfides connect C43–C63, C72–C106, and C81–C117. Residues 120–201 form a disordered region; it reads AGPQAHMQQV…PGGNEEAKKK (82 aa). The span at 125–144 shows a compositional bias: polar residues; sequence HMQQVTSSLKGSPEPNQQPE. Residues 175 to 186 show a composition bias toward low complexity; that stretch reads AKPTTRPTAKPT. C206 and C214 are oxidised to a cystine.

It belongs to the fibroblast growth factor-binding protein family. As to expression, expressed in serum, peripheral leukocytes and cytotoxic T-lymphocytes, but not in granulocytes and monocytes (at protein level).

The protein localises to the secreted. The protein resides in the extracellular space. This Homo sapiens (Human) protein is Fibroblast growth factor-binding protein 2 (FGFBP2).